A 568-amino-acid polypeptide reads, in one-letter code: Phosphoprotein (568 aa).

Disordered regions lie at residues M1–E23 and S38–E320. The span at I7–G20 shows a compositional bias: basic and acidic residues. The segment at D33–T41 is N0 binding. The segment covering L50 to G59 has biased composition (polar residues). S68 carries the post-translational modification Phosphoserine; by host. Basic and acidic residues predominate over residues R83 to A101. S125 is modified (phosphoserine; by host). A compositionally biased stretch (basic and acidic residues) spans G150–D168. Positions A191 to A206 are enriched in polar residues. Phosphoserine; by host is present on residues S192, S249, S257, and S260. The segment at F344–S411 is multimerization. The stretch at Y364–H429 forms a coiled coil. A l protein binding region spans residues E412 to T445. S447 and S449 each carry phosphoserine; by host. Positions D479 to N568 are interaction with the nucleocapsid (N-RNA). Residues Q496 to K516 are disordered.

This sequence belongs to the respirovirus P protein family. As to quaternary structure, homotetramer. Interacts (via multimerization domain) with polymerase L; this interaction forms the polymerase complex. Interacts (via N-terminus) with N0; this interaction allows P to chaperon N0 before encapsidation and form the N-P complex. Interacts (via C-terminus) with N-RNA template; this interaction positions the polymerase on the template. Post-translationally, phosphorylated by PKC/PRKCZ, and other unknown kinases. Phosphorylation is necessary for viral transcription and replication. The N-terminus contains the majority of phosphorylated sites. Ser-249 is the major site of phosphorylation, but is not necessary for most functions.

Its function is as follows. Essential cofactor of the RNA polymerase L that plays a central role in the transcription and replication by forming the polymerase complex with RNA polymerase L and recruiting L to the genomic N-RNA template for RNA synthesis. Also plays a central role in the encapsidation of nascent RNA chains by forming the encapsidation complex with the nucleocapsid protein N (N-P complex). Acts as a chaperone for newly synthesized free N protein, so-called N0, allowing encapsidation of nascent RNA chains during replication. The nucleoprotein protein N prevents excessive phosphorylation of P, which leads to down-regulation of viral transcription/ replication. Participates, together with N, in the formation of viral factories (viroplasms), which are large inclusions in the host cytoplasm where replication takes place. Recruits host PI4KB and remodel the host endoplasmic reticulum membrane to form viral replication factories. This is Phosphoprotein (P/V/C) from Sendai virus (strain Z) (SeV).